Here is a 452-residue protein sequence, read N- to C-terminus: Probable glycine dehydrogenase (decarboxylating) subunit 1 (452 aa).

It belongs to the GcvP family. N-terminal subunit subfamily. In terms of assembly, the glycine cleavage system is composed of four proteins: P, T, L and H. In this organism, the P 'protein' is a heterodimer of two subunits.

The enzyme catalyses N(6)-[(R)-lipoyl]-L-lysyl-[glycine-cleavage complex H protein] + glycine + H(+) = N(6)-[(R)-S(8)-aminomethyldihydrolipoyl]-L-lysyl-[glycine-cleavage complex H protein] + CO2. In terms of biological role, the glycine cleavage system catalyzes the degradation of glycine. The P protein binds the alpha-amino group of glycine through its pyridoxal phosphate cofactor; CO(2) is released and the remaining methylamine moiety is then transferred to the lipoamide cofactor of the H protein. This is Probable glycine dehydrogenase (decarboxylating) subunit 1 from Nitrosospira multiformis (strain ATCC 25196 / NCIMB 11849 / C 71).